The chain runs to 151 residues: Probable cGMP 3',5'-cyclic phosphodiesterase subunit delta (151 aa).

The protein belongs to the PDE6D/unc-119 family. As to quaternary structure, interacts with Pde6.

Its subcellular location is the nucleus. The protein resides in the cytoplasm. In Aedes aegypti (Yellowfever mosquito), this protein is Probable cGMP 3',5'-cyclic phosphodiesterase subunit delta.